A 155-amino-acid polypeptide reads, in one-letter code: Ribosome maturation factor RimP (155 aa).

Belongs to the RimP family.

The protein localises to the cytoplasm. Required for maturation of 30S ribosomal subunits. This chain is Ribosome maturation factor RimP, found in Phocaeicola vulgatus (strain ATCC 8482 / DSM 1447 / JCM 5826 / CCUG 4940 / NBRC 14291 / NCTC 11154) (Bacteroides vulgatus).